We begin with the raw amino-acid sequence, 365 residues long: Oligosaccharides import ATP-binding protein MsmX (365 aa).

The ABC transporter domain occupies 4–235 (LRMEHIYKFY…PENVFVGGFI (232 aa)). 37-44 (GPSGCGKS) is an ATP binding site.

The protein belongs to the ABC transporter superfamily. In terms of assembly, the complex involved in maltodextrin import is composed of two ATP-binding proteins (MsmX), two transmembrane proteins (MdxF and MdxG) and a solute-binding protein (MdxE). The complex involved in arabinooligosaccharides uptake is composed of two ATP-binding proteins (MsmX), two transmembrane proteins (AraP and AraQ) and a solute-binding protein (AraN). The complex involved in galactooligosaccharides uptake is composed of two ATP-binding proteins (MsmX), two transmembrane proteins (GanP and GanQ) and a solute-binding protein (GanS). The complex involved in melibiose, raffinose and stachyose import is composed of two ATP-binding proteins (MsmX), two transmembrane proteins (MelC and MelD) and a solute-binding protein (MelE). The complex involved in polygalacturonan and rhamnogalacturonan type I uptake is probably composed of two ATP-binding proteins (MsmX), two transmembrane proteins (YtcP and YteP) and a solute-binding protein (YtcQ).

It localises to the cell membrane. Required to energize different ABC-type saccharide transporters. Part of the MdxEFG-MsmX ABC transporter complex involved in maltodextrin import, of the AraNPQ-MsmX complex involved in arabinooligosaccharides import, of the GanPQS-MsmX complex involved in galactooligosaccharides import, and of the MelEDC-MsmX complex involved in melibiose, raffinose and stachyose import. Is probably also part of the ABC transporter complex YtcQP-YteP-MsmX involved in polygalacturonan and rhamnogalacturonan type I import during pectin degradation. Responsible for energy coupling to the transport system. This chain is Oligosaccharides import ATP-binding protein MsmX (msmX), found in Bacillus subtilis (strain 168).